The following is a 353-amino-acid chain: CCN family member 3 (353 aa).

Positions 1-26 (MEPGGGHSLPVLLLLLLLLLLRPSEV) are cleaved as a signal peptide. Residues 29 to 103 (REAPCPRPCG…GGGTGICMVL (75 aa)) form the IGFBP N-terminal domain. 6 cysteine pairs are disulfide-bonded: Cys-33–Cys-59, Cys-37–Cys-61, Cys-41–Cys-62, Cys-48–Cys-65, Cys-73–Cys-87, and Cys-79–Cys-100. The region spanning 106–172 (DNCVFDGMIY…GECCEKWVCE (67 aa)) is the VWFC domain. The TSP type-1 domain maps to 203–248 (NCIEQTTEWSACSRSCGMGFSTRVTNRNQQCEMVKQTRLCMMRPCE). Disulfide bonds link Cys-260/Cys-297, Cys-277/Cys-311, Cys-288/Cys-327, Cys-291/Cys-329, and Cys-296/Cys-333. The 75-residue stretch at 260-334 (CIRTKKSMKA…NTCVCHGNCP (75 aa)) folds into the CTCK domain. Asn-276 carries an N-linked (GlcNAc...) asparagine glycan.

This sequence belongs to the CCN family.

It localises to the secreted. The protein localises to the cytoplasm. Its subcellular location is the cell junction. The protein resides in the gap junction. In terms of biological role, immediate-early protein likely to play a role in cell growth regulation. The chain is CCN family member 3 (CCN3) from Coturnix japonica (Japanese quail).